The chain runs to 414 residues: Isocitrate dehydrogenase [NADP] cytoplasmic (414 aa).

At serine 2 the chain carries N-acetylserine. At tyrosine 42 the chain carries Phosphotyrosine. 75–77 (TIT) lines the NADP(+) pocket. Residue threonine 77 coordinates substrate. The residue at position 81 (lysine 81) is an N6-acetyllysine. Arginine 82 is a binding site for NADP(+). Residues 94–100 (SPNGTIR) and arginine 109 each bind substrate. Position 126 is an N6-succinyllysine (lysine 126). Residues arginine 132 and lysine 212 each coordinate substrate. N6-acetyllysine is present on residues lysine 224, lysine 233, and lysine 243. Aspartate 252 lines the Mn(2+) pocket. An NADP(+)-binding site is contributed by lysine 260. Mn(2+)-binding residues include aspartate 275 and aspartate 279. 310 to 315 (GTVTRH) provides a ligand contact to NADP(+). N6-acetyllysine is present on lysine 321. Asparagine 328 provides a ligand contact to NADP(+). Serine 389 carries the phosphoserine modification. Position 400 is an N6-succinyllysine (lysine 400).

Belongs to the isocitrate and isopropylmalate dehydrogenases family. In terms of assembly, homodimer. Mg(2+) serves as cofactor. Mn(2+) is required as a cofactor. Post-translationally, the N-terminus is blocked. In terms of processing, acetylation at Lys-374 dramatically reduces catalytic activity. As to expression, ubiquitous.

It is found in the cytoplasm. The protein resides in the cytosol. Its subcellular location is the peroxisome. The catalysed reaction is D-threo-isocitrate + NADP(+) = 2-oxoglutarate + CO2 + NADPH. Catalyzes the NADP(+)-dependent oxidative decarboxylation of isocitrate (D-threo-isocitrate) to 2-ketoglutarate (2-oxoglutarate), which is required by other enzymes such as the phytanoyl-CoA dioxygenase. Plays a critical role in the generation of NADPH, an important cofactor in many biosynthesis pathways. May act as a corneal epithelial crystallin and may be involved in maintaining corneal epithelial transparency. The sequence is that of Isocitrate dehydrogenase [NADP] cytoplasmic (Idh1) from Rattus norvegicus (Rat).